The following is a 1730-amino-acid chain: Myosin-7 (1730 aa).

One can recognise a Myosin N-terminal SH3-like domain in the interval T8 to P56. In terms of domain architecture, Myosin motor spans L61 to A731. ATP-binding positions include G155 to T162 and N208 to K216. Actin-binding stretches follow at residues L494 to F528, N530 to V553, F588 to L612, and L612 to N634. 4 consecutive IQ domains span residues L757–S786, R782–S811, R831–Y850, and T853–E882. Residues T883–I1224 adopt a coiled-coil conformation. The Dilute domain maps to D1327–N1678. Disordered regions lie at residues Q1367 to M1387 and D1456 to E1520. Positions D1456–K1465 are enriched in low complexity. The span at S1475–P1508 shows a compositional bias: basic and acidic residues.

This sequence belongs to the TRAFAC class myosin-kinesin ATPase superfamily. Myosin family. Plant myosin class XI subfamily. In terms of assembly, homodimer.

Functionally, myosin heavy chain that is required for the cell cycle-regulated transport of various organelles and proteins for their segregation. Functions by binding with its tail domain to receptor proteins on organelles and exerting force with its N-terminal motor domain against actin filaments, thereby transporting its cargo along polarized actin cables. The protein is Myosin-7 (XI-A) of Arabidopsis thaliana (Mouse-ear cress).